Consider the following 432-residue polypeptide: 5-hydroxybenzimidazole synthase BzaA (432 aa).

Residues Met95, Tyr124, His163, 185-187 (SYG), and 226-229 (DGMR) each bind substrate. His269 contributes to the Zn(2+) binding site. Substrate is bound at residue Phe292. A Zn(2+)-binding site is contributed by His333. [4Fe-4S] cluster is bound by residues Cys409, Cys412, and Cys416.

Belongs to the ThiC family. 5-hydroxybenzimidazole synthase subfamily. Requires [4Fe-4S] cluster as cofactor.

It catalyses the reaction 5-amino-1-(5-phospho-beta-D-ribosyl)imidazole + AH2 + S-adenosyl-L-methionine = 5-hydroxybenzimidazole + 5'-deoxyadenosine + formate + L-methionine + A + NH4(+) + phosphate + 2 H(+). Together with BzaB, probably catalyzes the conversion of aminoimidazole ribotide (AIR) to 5-hydroxybenzimidazole (5-HBI) in a radical S-adenosyl-L-methionine (SAM)-dependent reaction. Is thus involved in the anaerobic biosynthesis of the benzimidazole lower axial ligand of the cobamide produced by M.thermoacetica. Requires BzaB for catalytic activity, as BzaA alone displays no activity. This chain is 5-hydroxybenzimidazole synthase BzaA, found in Moorella thermoacetica (strain ATCC 39073 / JCM 9320).